The sequence spans 1412 residues: DNA-directed RNA polymerase subunit beta' (1412 aa).

C70, C72, C85, and C88 together coordinate Zn(2+). The Mg(2+) site is built by D460, D462, and D464. Residues C819, C893, C900, and C903 each coordinate Zn(2+). The segment at 1391–1412 is disordered; that stretch reads AEESFEFGTPETPAAEQQHSGE.

Belongs to the RNA polymerase beta' chain family. The RNAP catalytic core consists of 2 alpha, 1 beta, 1 beta' and 1 omega subunit. When a sigma factor is associated with the core the holoenzyme is formed, which can initiate transcription. The cofactor is Mg(2+). Requires Zn(2+) as cofactor.

It carries out the reaction RNA(n) + a ribonucleoside 5'-triphosphate = RNA(n+1) + diphosphate. In terms of biological role, DNA-dependent RNA polymerase catalyzes the transcription of DNA into RNA using the four ribonucleoside triphosphates as substrates. The sequence is that of DNA-directed RNA polymerase subunit beta' from Paraburkholderia phytofirmans (strain DSM 17436 / LMG 22146 / PsJN) (Burkholderia phytofirmans).